The following is a 190-amino-acid chain: uncharacterized protein (190 aa).

An N-terminal signal peptide occupies residues 1–28 (MEFSLQYITIFIFVILFLIGLFSSKSRS).

This is an uncharacterized protein from Haemophilus influenzae (strain ATCC 51907 / DSM 11121 / KW20 / Rd).